Reading from the N-terminus, the 738-residue chain is Glycogen [starch] synthase, muscle (738 aa).

Phosphoserine; by AMPK and PKA is present on Ser8. Ser11 carries the phosphoserine modification. Lys39 serves as a coordination point for UDP. His205 and Arg211 together coordinate UDP-alpha-D-glucose. Residues His291, Glu292, Gln294, His297, and Lys301 each contribute to the alpha-D-glucose 6-phosphate site. Arg331 is a UDP binding site. Arg331 serves as a coordination point for UDP-alpha-D-glucose. The residue at position 412 (Ser412) is a Phosphoserine. His501 serves as a coordination point for alpha-D-glucose 6-phosphate. UDP-alpha-D-glucose is bound by residues Glu510, Trp512, and Gly513. UDP is bound at residue Thr515. Positions 582 and 586 each coordinate alpha-D-glucose 6-phosphate. Positions 632 to 738 are disordered; the sequence is QGYRYPRPAS…PTSSLGEERN (107 aa). Phosphoserine is present on residues Ser641 and Ser645. Ser649 is modified (phosphoserine; by GSK3-alpha and GSK3-beta). Phosphoserine occurs at positions 652, 653, 657, and 672. The segment covering 682 to 695 has biased composition (basic and acidic residues); the sequence is AKDRRNIRAPEWPR. Ser698, Ser709, and Ser711 each carry phosphoserine. The segment covering 698–738 has biased composition (low complexity); the sequence is SCSSSTGGSKRSNSVDTGPSSSLSTPTEPLSPTSSLGEERN. Thr722 carries the post-translational modification Phosphothreonine. Residues Ser728 and Ser732 each carry the phosphoserine modification.

The protein belongs to the glycosyltransferase 3 family. In terms of assembly, part of the GYS1-GYG1 complex, a heterooctamer composed of a tetramer of GYS1 and 2 dimers of GYG1, where each GYS1 protomer binds to one GYG1 subunit (via GYG1 C-terminus); the GYS1 tetramer may dissociate from GYG1 dimers to continue glycogen polymerization on its own. Post-translationally, phosphorylation at Ser-8 by AMPK inactivates the enzyme activity. Primed phosphorylation at Ser-657 (site 5) by CSNK2A1 and CSNK2A2 is required for inhibitory phosphorylation at Ser-641 (site 3a), Ser-645 (site 3b), Ser-649 (site 3c) and Ser-653 (site 4) by GSK3A an GSK3B. Phosphorylated at Ser-641 by PASK, leading to inactivation; phosphorylation by PASK is inhibited by glycogen. Phosphorylated at Ser-641 by DYRK2, leading to inactivation. Dephosphorylation at Ser-641 and Ser-645 by PP1 activates the enzyme.

The catalysed reaction is [(1-&gt;4)-alpha-D-glucosyl](n) + UDP-alpha-D-glucose = [(1-&gt;4)-alpha-D-glucosyl](n+1) + UDP + H(+). It functions in the pathway glycan biosynthesis; glycogen biosynthesis. Its activity is regulated as follows. Allosteric activation by glucose-6-phosphate. Phosphorylation reduces the activity towards UDP-glucose. When in the non-phosphorylated state, glycogen synthase does not require glucose-6-phosphate as an allosteric activator; when phosphorylated it does. In terms of biological role, glycogen synthase participates in the glycogen biosynthetic process along with glycogenin and glycogen branching enzyme. Extends the primer composed of a few glucose units formed by glycogenin by adding new glucose units to it. In this context, glycogen synthase transfers the glycosyl residue from UDP-Glc to the non-reducing end of alpha-1,4-glucan. In Rattus norvegicus (Rat), this protein is Glycogen [starch] synthase, muscle (Gys1).